We begin with the raw amino-acid sequence, 556 residues long: Arginine--tRNA ligase (556 aa).

Residues 132–142 carry the 'HIGH' region motif; sequence VNPTGDLHLGH.

This sequence belongs to the class-I aminoacyl-tRNA synthetase family. Monomer.

Its subcellular location is the cytoplasm. It carries out the reaction tRNA(Arg) + L-arginine + ATP = L-arginyl-tRNA(Arg) + AMP + diphosphate. This chain is Arginine--tRNA ligase, found in Oceanobacillus iheyensis (strain DSM 14371 / CIP 107618 / JCM 11309 / KCTC 3954 / HTE831).